The following is a 484-amino-acid chain: Glutamate mutase epsilon subunit (484 aa).

Residue arginine 66 participates in L-glutamate binding. Glycine 68 contacts adenosylcob(III)alamin. Position 100 (arginine 100) interacts with L-glutamate. Asparagine 123 contacts adenosylcob(III)alamin. L-glutamate contacts are provided by residues 149-150 (RH), glutamate 171, and tyrosine 177. Proline 180 serves as a coordination point for adenosylcob(III)alamin. Tyrosine 181 serves as a coordination point for L-glutamate. Adenosylcob(III)alamin is bound by residues phenylalanine 297, lysine 326, glutamate 330, and isoleucine 334.

This sequence belongs to the methylaspartate mutase GlmE subunit family. As to quaternary structure, heterotetramer composed of 2 epsilon subunits (GlmE) and 2 sigma subunits (GlmS). GlmE exists as a homodimer and GlmS as a monomer. Adenosylcob(III)alamin serves as cofactor.

It carries out the reaction (2S,3S)-3-methyl-L-aspartate = L-glutamate. The protein operates within amino-acid degradation; L-glutamate degradation via mesaconate pathway; acetate and pyruvate from L-glutamate: step 1/4. Catalyzes the carbon skeleton rearrangement of L-glutamate to L-threo-3-methylaspartate ((2S,3S)-3-methylaspartate). The protein is Glutamate mutase epsilon subunit of Desulfitobacterium hafniense (strain Y51).